Consider the following 456-residue polypeptide: L-2-hydroxyglutarate dehydrogenase, mitochondrial (456 aa).

A mitochondrion-targeting transit peptide spans 1–20; the sequence is MLKTSFLLSKRNAVSLSRVL.

Belongs to the L2HGDH family. The cofactor is FAD.

Its subcellular location is the mitochondrion. It catalyses the reaction (S)-2-hydroxyglutarate + A = 2-oxoglutarate + AH2. In Nematostella vectensis (Starlet sea anemone), this protein is L-2-hydroxyglutarate dehydrogenase, mitochondrial.